The primary structure comprises 490 residues: Probable glycine dehydrogenase (decarboxylating) subunit 2 (490 aa).

At K273 the chain carries N6-(pyridoxal phosphate)lysine.

The protein belongs to the GcvP family. C-terminal subunit subfamily. In terms of assembly, the glycine cleavage system is composed of four proteins: P, T, L and H. In this organism, the P 'protein' is a heterodimer of two subunits. The cofactor is pyridoxal 5'-phosphate.

It carries out the reaction N(6)-[(R)-lipoyl]-L-lysyl-[glycine-cleavage complex H protein] + glycine + H(+) = N(6)-[(R)-S(8)-aminomethyldihydrolipoyl]-L-lysyl-[glycine-cleavage complex H protein] + CO2. In terms of biological role, the glycine cleavage system catalyzes the degradation of glycine. The P protein binds the alpha-amino group of glycine through its pyridoxal phosphate cofactor; CO(2) is released and the remaining methylamine moiety is then transferred to the lipoamide cofactor of the H protein. The polypeptide is Probable glycine dehydrogenase (decarboxylating) subunit 2 (Staphylococcus aureus (strain Mu50 / ATCC 700699)).